We begin with the raw amino-acid sequence, 986 residues long: Translation initiation factor IF-2 (986 aa).

Residues 47–388 are disordered; the sequence is SAPAQTPHKE…RSKGRKGKYE (342 aa). Residues 53–64 show a composition bias toward basic and acidic residues; it reads PHKEVSQEEVRV. Low complexity predominate over residues 78-94; the sequence is PEAASAEAASAPAAQEE. Basic and acidic residues predominate over residues 95-113; sequence APQKAEPEKVEAEKAEAPK. Composition is skewed to low complexity over residues 127-141 and 153-214; these read EAAP…PAEA and APVA…QAPA. Composition is skewed to basic and acidic residues over residues 215-225 and 268-278; these read KAEEQEPEKAT and GVERPGTERPA. Low complexity predominate over residues 286–300; that stretch reads PAGAPGRPGERPTTG. A compositionally biased stretch (basic and acidic residues) spans 358-374; sequence GKKDSFKDILDKRERVF. Residues 486 to 653 form the tr-type G domain; it reads KRPPVVTIMG…MVLLQADVLE (168 aa). Positions 495–502 are G1; sequence GHVDHGKT. Position 495 to 502 (495 to 502) interacts with GTP; it reads GHVDHGKT. The tract at residues 520-524 is G2; the sequence is GITQH. The interval 541-544 is G3; that stretch reads DTPG. Residues 541 to 545 and 595 to 598 contribute to the GTP site; these read DTPGH and NKID. A G4 region spans residues 595-598; it reads NKID. The tract at residues 631–633 is G5; it reads SAK.

This sequence belongs to the TRAFAC class translation factor GTPase superfamily. Classic translation factor GTPase family. IF-2 subfamily.

It localises to the cytoplasm. In terms of biological role, one of the essential components for the initiation of protein synthesis. Protects formylmethionyl-tRNA from spontaneous hydrolysis and promotes its binding to the 30S ribosomal subunits. Also involved in the hydrolysis of GTP during the formation of the 70S ribosomal complex. This chain is Translation initiation factor IF-2, found in Citrifermentans bemidjiense (strain ATCC BAA-1014 / DSM 16622 / JCM 12645 / Bem) (Geobacter bemidjiensis).